The chain runs to 493 residues: MTGELDVDGEPRSPSIAVVILAAGQGTRMRSRLPKVLHPLAGLPLVGHVLATAEELGARHVVTVVRHDRDQVVDVVSRLAPDALIVDQDEIPGTGRAVEVGITALPDGFTGQVVVLSGDVPLLDAATLRSLVSAHRQARNDLTLLTARLDDPTGNGRIIRGQDGAFEAIVEQKDATGEQLRIDEVNAGVYVFDAEALRQTLGAIGTDNAQREKYLTDAADVIRRAGGSIEALPVRDSWLVAGINDRVQLTAAATELNARIIRRWQLAGVTIHDPRTTWIDVKATLAADVTVLPGTQILGASTVAAGATVGPDTTLRDTEVGEDATVRRTDAELAVIGARATVGPFSFLRPGTRLGDEGKIGAYVETKNVEIGAGSKVPHLSYVGDATIGEHSNVGAGAVFANYDGVSKHRTEVGDHVHLGSRNVLVAPVRIGTGSYTGAGAVIRKDVPPGALGISVAPQRNMVGWTEAKRPGTPEARAAVEAADGPADDASDA.

The interval 1–246 (MTGELDVDGE…SWLVAGINDR (246 aa)) is pyrophosphorylase. UDP-N-acetyl-alpha-D-glucosamine is bound by residues 21–24 (LAAG), K35, Q88, 93–94 (GT), 117–119 (SGD), G156, E171, N186, and N244. Residue D119 participates in Mg(2+) binding. Residue N244 coordinates Mg(2+). The linker stretch occupies residues 247–267 (VQLTAAATELNARIIRRWQLA). The segment at 268 to 493 (GVTIHDPRTT…DGPADDASDA (226 aa)) is N-acetyltransferase. UDP-N-acetyl-alpha-D-glucosamine-binding residues include R349 and K367. The active-site Proton acceptor is H379. Residues Y382 and N393 each coordinate UDP-N-acetyl-alpha-D-glucosamine. Residues A396, 402–403 (NY), S421, and A439 each bind acetyl-CoA. The disordered stretch occupies residues 470–493 (RPGTPEARAAVEAADGPADDASDA).

In the N-terminal section; belongs to the N-acetylglucosamine-1-phosphate uridyltransferase family. The protein in the C-terminal section; belongs to the transferase hexapeptide repeat family. As to quaternary structure, homotrimer. The cofactor is Mg(2+).

The protein localises to the cytoplasm. The enzyme catalyses alpha-D-glucosamine 1-phosphate + acetyl-CoA = N-acetyl-alpha-D-glucosamine 1-phosphate + CoA + H(+). It carries out the reaction N-acetyl-alpha-D-glucosamine 1-phosphate + UTP + H(+) = UDP-N-acetyl-alpha-D-glucosamine + diphosphate. The protein operates within nucleotide-sugar biosynthesis; UDP-N-acetyl-alpha-D-glucosamine biosynthesis; N-acetyl-alpha-D-glucosamine 1-phosphate from alpha-D-glucosamine 6-phosphate (route II): step 2/2. Its pathway is nucleotide-sugar biosynthesis; UDP-N-acetyl-alpha-D-glucosamine biosynthesis; UDP-N-acetyl-alpha-D-glucosamine from N-acetyl-alpha-D-glucosamine 1-phosphate: step 1/1. It functions in the pathway bacterial outer membrane biogenesis; LPS lipid A biosynthesis. Functionally, catalyzes the last two sequential reactions in the de novo biosynthetic pathway for UDP-N-acetylglucosamine (UDP-GlcNAc). The C-terminal domain catalyzes the transfer of acetyl group from acetyl coenzyme A to glucosamine-1-phosphate (GlcN-1-P) to produce N-acetylglucosamine-1-phosphate (GlcNAc-1-P), which is converted into UDP-GlcNAc by the transfer of uridine 5-monophosphate (from uridine 5-triphosphate), a reaction catalyzed by the N-terminal domain. This Clavibacter sepedonicus (Clavibacter michiganensis subsp. sepedonicus) protein is Bifunctional protein GlmU.